The primary structure comprises 382 residues: Apolipoprotein A-IV (382 aa).

An N-terminal signal peptide occupies residues 1–20 (MFLKAVVLTLSLVAVTGAQA). A run of 13 repeats spans residues 33–54 (DYFS…KSEL), 60–81 (ALFQ…KKLV), 82–103 (SFAM…EEIR), 115–136 (PHAD…QRLG), 137–158 (PYAE…NQLT), 159–180 (AHAQ…ASLT), 181–202 (PYAD…GHLT), 203–224 (PYAD…RSLA), 225–246 (PYAQ…FQMK), 247–268 (KNAE…QKLV), 269–286 (PVAE…EELQ), 287–308 (KSLA…RNMG), and 309–330 (PYGE…QKLG). The interval 33 to 330 (DYFSQLSNNA…QVEELRQKLG (298 aa)) is 13 X 22 AA approximate tandem repeats.

Belongs to the apolipoprotein A1/A4/E family. As to quaternary structure, homodimer. Post-translationally, phosphorylation sites are present in the extracellular medium.

The protein localises to the secreted. Functionally, may have a role in chylomicrons and VLDL secretion and catabolism. Required for efficient activation of lipoprotein lipase by ApoC-II; potent activator of LCAT. Apoa-IV is a major component of HDL and chylomicrons. This chain is Apolipoprotein A-IV (APOA4), found in Mirounga angustirostris (Northern elephant seal).